The sequence spans 201 residues: Protein CD300H (201 aa).

The signal sequence occupies residues 1–24; that stretch reads MTQRAGAAMLPSALLLLCVPGCLT. Residues 25–123 form the Ig-like V-type domain; sequence VSGPSTVMGA…ATILQEDGLS (99 aa). Over 25–168 the chain is Extracellular; it reads VSGPSTVMGA…CQGSLPSSTC (144 aa). C43 and C111 are oxidised to a cystine. The N-linked (GlcNAc...) asparagine glycan is linked to N100. The chain crosses the membrane as a helical span at residues 169–189; the sequence is FLLLPLLKVPLLLSILGAILW. Over 190–201 the chain is Cytoplasmic; it reads VNRPWRTPWTES.

This sequence belongs to the CD300 family. Interacts with TYROBP and HCST. In terms of tissue distribution, expressed on CD16+ monocytes and myeloid dendritic cells (at protein level). By contrast, not detected in lymphocytes nor granulocytes (at protein level).

Its subcellular location is the membrane. The protein localises to the secreted. In terms of biological role, may play an important role in innate immunity by mediating a signal for the production of a neutrophil chemoattractant. In Homo sapiens (Human), this protein is Protein CD300H.